A 148-amino-acid chain; its full sequence is Large ribosomal subunit protein bL19 (148 aa).

The protein belongs to the bacterial ribosomal protein bL19 family.

In terms of biological role, this protein is located at the 30S-50S ribosomal subunit interface and may play a role in the structure and function of the aminoacyl-tRNA binding site. The polypeptide is Large ribosomal subunit protein bL19 (Paramagnetospirillum magneticum (strain ATCC 700264 / AMB-1) (Magnetospirillum magneticum)).